Here is a 188-residue protein sequence, read N- to C-terminus: Pyridoxal 5'-phosphate synthase subunit PdxT (188 aa).

L-glutamine is bound at residue 47–49; that stretch reads GES. Cysteine 79 acts as the Nucleophile in catalysis. L-glutamine contacts are provided by residues arginine 105 and 134-135; that span reads IR. Active-site charge relay system residues include histidine 170 and glutamate 172.

The protein belongs to the glutaminase PdxT/SNO family. As to quaternary structure, in the presence of PdxS, forms a dodecamer of heterodimers. Only shows activity in the heterodimer.

It carries out the reaction aldehydo-D-ribose 5-phosphate + D-glyceraldehyde 3-phosphate + L-glutamine = pyridoxal 5'-phosphate + L-glutamate + phosphate + 3 H2O + H(+). The enzyme catalyses L-glutamine + H2O = L-glutamate + NH4(+). The protein operates within cofactor biosynthesis; pyridoxal 5'-phosphate biosynthesis. Its function is as follows. Catalyzes the hydrolysis of glutamine to glutamate and ammonia as part of the biosynthesis of pyridoxal 5'-phosphate. The resulting ammonia molecule is channeled to the active site of PdxS. The protein is Pyridoxal 5'-phosphate synthase subunit PdxT of Listeria monocytogenes serotype 4b (strain CLIP80459).